We begin with the raw amino-acid sequence, 170 residues long: Cathelicidin antimicrobial peptide (170 aa).

A signal peptide spans 1–30; the sequence is MKTQRDGHSLGRWSLVLLLLGLVMPLAIVA. A propeptide spans 31–131 (cathelin-like domain (CLD)); it reads QVLSYKEAVL…DISCDKDNKR (101 aa). Intrachain disulfides connect C86-C97 and C108-C125. The active core stretch occupies residues 150–162; the sequence is FKRIVQRIKDFLR.

This sequence belongs to the cathelicidin family. In terms of assembly, monomer, homodimer or homotrimer (in vitro). Oligomerizes as tetra- or hexamer in solution (in vitro). Post-translationally, proteolytically cleaved by proteinase PRTN3 into antibacterial peptide LL-37. Proteolytically cleaved by cathepsin CTSG and neutrophil elastase ELANE. In terms of processing, resistant to proteolytic degradation in solution, and when bound to both zwitterionic (mimicking mammalian membranes) and negatively charged membranes (mimicking bacterial membranes). After secretion onto the skin surface, the CAMP gene product is processed by a serine protease-dependent mechanism into multiple novel antimicrobial peptides distinct from and shorter than cathelicidin LL-37. These peptides show enhanced antimicrobial action, acquiring the ability to kill skin pathogens such as S.aureus, E.coli and C.albicans. These peptides have lost the ability to stimulate CXCL8/IL8 release from keratinocytes. The peptides act synergistically, killing bacteria at lower concentrations when present together, and maintain activity at increased salt condition.

It is found in the secreted. The protein localises to the vesicle. Antimicrobial protein that is an integral component of the innate immune system. Binds to bacterial lipopolysaccharides (LPS). Acts via neutrophil N-formyl peptide receptors to enhance the release of CXCL2. Postsecretory processing generates multiple cathelicidin antimicrobial peptides with various lengths which act as a topical antimicrobial defense in sweat on skin. The unprocessed precursor form, cathelicidin antimicrobial peptide, inhibits the growth of Gram-negative E.coli and E.aerogenes with efficiencies comparable to that of the mature peptide LL-37 (in vitro). Its function is as follows. Antimicrobial peptide that is an integral component of the innate immune system. Binds to bacterial lipopolysaccharides (LPS). Causes membrane permeabilization by forming transmembrane pores (in vitro). Causes lysis of E.coli. Exhibits antimicrobial activity against Gram-negative bacteria such as P.aeruginosa, S.typhimurium, E.aerogenes, E.coli and P.syringae, Gram-positive bacteria such as L.monocytogenes, S.epidermidis, S.pyogenes and S.aureus, as well as vancomycin-resistant enterococci (in vitro). Exhibits antimicrobial activity against methicillin-resistant S.aureus, P.mirabilis, and C.albicans in low-salt media, but not in media containing 100 mM NaCl (in vitro). Forms chiral supramolecular assemblies with quinolone signal (PQS) molecules of P.aeruginosa, which may lead to interference of bacterial quorum signaling and perturbance of bacterial biofilm formation. May form supramolecular fiber-like assemblies on bacterial membranes. Induces cytokine and chemokine producation as well as TNF/TNFA and CSF2/GMCSF production in normal human keratinocytes. Exhibits hemolytic activity against red blood cells. Functionally, exhibits antimicrobial activity against E.coli and B.megaterium (in vitro). The sequence is that of Cathelicidin antimicrobial peptide from Pan troglodytes (Chimpanzee).